The sequence spans 297 residues: Octopine catabolism/uptake operon regulatory protein OccR (297 aa).

Positions 1–58 constitute an HTH lysR-type domain; that stretch reads MNLRQVEAFRAVMLTGQMTAAAELMLVTQPAISRLIKDFERATKLQLFERRGNHIIPT. Positions 18 to 37 form a DNA-binding region, H-T-H motif; that stretch reads MTAAAELMLVTQPAISRLIK.

The protein belongs to the LysR transcriptional regulatory family.

Positive regulatory protein for the occ operon involved in octopine catabolism and uptake. Also acts as a negative regulator of its expression. The sequence is that of Octopine catabolism/uptake operon regulatory protein OccR (occR) from Rhizobium meliloti (Ensifer meliloti).